Reading from the N-terminus, the 556-residue chain is Arginine--tRNA ligase 2 (556 aa).

The 'HIGH' region signature appears at 132–142; the sequence is ANPTGDLHLGH.

The protein belongs to the class-I aminoacyl-tRNA synthetase family. Monomer.

Its subcellular location is the cytoplasm. It catalyses the reaction tRNA(Arg) + L-arginine + ATP = L-arginyl-tRNA(Arg) + AMP + diphosphate. The protein is Arginine--tRNA ligase 2 of Bacillus thuringiensis subsp. konkukian (strain 97-27).